A 1175-amino-acid polypeptide reads, in one-letter code: DNA-directed RNA polymerase subunit beta (1175 aa).

A disordered region spans residues 12–33 (QSKTDRPQSSSNGSSSLNGSVP). Residues 20 to 31 (SSSNGSSSLNGS) are compositionally biased toward low complexity.

It belongs to the RNA polymerase beta chain family. In terms of assembly, the RNAP catalytic core consists of 2 alpha, 1 beta, 1 beta' and 1 omega subunit. When a sigma factor is associated with the core the holoenzyme is formed, which can initiate transcription.

The enzyme catalyses RNA(n) + a ribonucleoside 5'-triphosphate = RNA(n+1) + diphosphate. Its function is as follows. DNA-dependent RNA polymerase catalyzes the transcription of DNA into RNA using the four ribonucleoside triphosphates as substrates. In Mycobacterium avium (strain 104), this protein is DNA-directed RNA polymerase subunit beta.